Here is a 772-residue protein sequence, read N- to C-terminus: PDZ domain-containing protein 4 (772 aa).

The region spanning 136–221 is the PDZ domain; the sequence is EVELCKNSHQ…NISLLVARPE (86 aa). A disordered region spans residues 239–320; it reads DFGSENEGDL…TNTPGSLRKF (82 aa). The residue at position 242 (serine 242) is a Phosphoserine. Basic and acidic residues predominate over residues 287–303; that stretch reads RTDESTRNEESSEHDLL. Residues 394–424 are a coiled coil; sequence VNRNESLGHEMAMLEEELRHLEFKCRNILRA. A disordered region spans residues 450 to 573; that stretch reads ASEPKKHELS…VGPEGSPYLS (124 aa). The span at 452–472 shows a compositional bias: basic and acidic residues; sequence EPKKHELSDISELPEKSDKDS. Position 459 is a phosphoserine (serine 459). Composition is skewed to polar residues over residues 473–484 and 502–511; these read TSAYNTGESCRS and AGNSNLNRTP. Positions 535 to 552 are enriched in basic and acidic residues; sequence LSRDPEVGRRQHTEERVR.

It localises to the cytoplasm. The protein resides in the cell cortex. The polypeptide is PDZ domain-containing protein 4 (Pdzd4) (Mus musculus (Mouse)).